A 76-amino-acid chain; its full sequence is MSYFAFFYGYYNQITFRLQYHHQYVTLPYSTLNFALSLVEKNYMLFFYLYMHIFIEKHNQYFFYWYNPSNQTYKSK.

This is an uncharacterized protein from Saccharomyces cerevisiae (strain ATCC 204508 / S288c) (Baker's yeast).